Consider the following 504-residue polypeptide: D-alanine--D-alanyl carrier protein ligase (504 aa).

152-153 (TS) contributes to the ATP binding site. A D-alanine-binding site is contributed by aspartate 197. Residue 292–297 (NTYGPT) participates in ATP binding. Residue valine 301 participates in D-alanine binding. Residues aspartate 383, 394–397 (YNGR), and lysine 492 each bind ATP. Residue lysine 492 participates in D-alanine binding.

The protein belongs to the ATP-dependent AMP-binding enzyme family. DltA subfamily.

The protein localises to the cytoplasm. The enzyme catalyses holo-[D-alanyl-carrier protein] + D-alanine + ATP = D-alanyl-[D-alanyl-carrier protein] + AMP + diphosphate. It functions in the pathway cell wall biogenesis; lipoteichoic acid biosynthesis. Its function is as follows. Catalyzes the first step in the D-alanylation of lipoteichoic acid (LTA), the activation of D-alanine and its transfer onto the D-alanyl carrier protein (Dcp) DltC. In an ATP-dependent two-step reaction, forms a high energy D-alanyl-AMP intermediate, followed by transfer of the D-alanyl residue as a thiol ester to the phosphopantheinyl prosthetic group of the Dcp. D-alanylation of LTA plays an important role in modulating the properties of the cell wall in Gram-positive bacteria, influencing the net charge of the cell wall. This chain is D-alanine--D-alanyl carrier protein ligase, found in Bacillus mycoides (strain KBAB4) (Bacillus weihenstephanensis).